The primary structure comprises 116 residues: Outer membrane protein assembly factor BamE (116 aa).

An N-terminal signal peptide occupies residues 1-22 (MITMRCKMLTAAAVMLAMLTAG). Cys23 is lipidated: N-palmitoyl cysteine. The S-diacylglycerol cysteine moiety is linked to residue Cys23.

The protein belongs to the BamE family. As to quaternary structure, part of the Bam complex, which is composed of the outer membrane protein BamA, and four lipoproteins BamB, BamC, BamD and BamE.

It localises to the cell outer membrane. Its function is as follows. Part of the outer membrane protein assembly complex, which is involved in assembly and insertion of beta-barrel proteins into the outer membrane. This is Outer membrane protein assembly factor BamE from Yersinia pestis.